Here is an 898-residue protein sequence, read N- to C-terminus: MTQITVKALSEEIGTPVDRLLEQLADAGMNKAVADHVSEDEKQKLLAHLRKEHGDATGSEPTRLTLQRKTRSTLSVNAGGGKSKNVQVEVRKKRTYVKRSSVEDEATREAEEAAMRAAEEQAKREAEEAAQRAAEEKAKREAEEAAKREAEAKRMAEEKAKRETQAATQPRSDEEKLKQEAARKEAEALKRRQEEEARRKAEEESRRQLEKVRELAEKNGERWSADKETVGDMQENTDYHVTTSRYAREAEDEADLHEEGARRRSTKANKRKMSSRDDNQERDSRPRGGKAGRKGRINKPMSMQHGFDKTAVVAKADVVVGETIVVSELAQKMSVKATEVIKVMMKMGAMATINQVIDQETAQLVAEEMGHKVVLRKENELEEAILSDRDDKFEEVSRAPVVTIMGHVDHGKTSTLDYIRRTHVASGEAGGITQHIGAYHVETPNGMITFLDTPGHAAFTAMRARGAQATDIVVLVVAADDGVMPQTVEAIQHAKAAGVPLIVAVNKIDKDTANPDNVKTELSQYNVMPEEWGGDNMFVHISAKQGTNIDGLLEAILLQAEVLELKAVKQGMASGVVIESRLDKGRGPVATVLVQSGTLRKGDIVLCGQEYGRVRAMRDEVGNEVEEAGPSIPVEILGLSGVPAAGDEATVVRDERKAREVANYRAGKFREVKLARQQKSKLENMFSNMTAGDVAELNIVLKADVQGSVEAIADSLTKLSTDEVKVNIVGSGVGGITETDAVLAAASNAIVVGFNVRADASARRMIEAENIDLRYYSIIYQLIDEVKQAMSGMLSPEFKQEIIGLAEVRDVFKSPKLGAIAGCMVTEGVIKRNAPIRVLRDNVVIYEGELESLRRFKDDVAEVKNGYECGIGVKNYNDVRVGDQIEVFETIEIQRTID.

The interval lysine 51–serine 302 is disordered. Basic and acidic residues-rich tracts occupy residues serine 100 to threonine 164 and arginine 171 to valine 230. Polar residues predominate over residues glutamine 234–arginine 245. A compositionally biased stretch (basic residues) spans arginine 263–methionine 273. Over residues serine 274 to proline 286 the composition is skewed to basic and acidic residues. Over residues arginine 287–isoleucine 297 the composition is skewed to basic residues. The 170-residue stretch at serine 397–lysine 566 folds into the tr-type G domain. The segment at glycine 406–threonine 413 is G1. Position 406–413 (glycine 406–threonine 413) interacts with GTP. Residues glycine 431 to histidine 435 form a G2 region. A G3 region spans residues aspartate 452–glycine 455. GTP contacts are provided by residues aspartate 452 to histidine 456 and asparagine 506 to aspartate 509. Residues asparagine 506–aspartate 509 are G4. Positions serine 542–lysine 544 are G5.

The protein belongs to the TRAFAC class translation factor GTPase superfamily. Classic translation factor GTPase family. IF-2 subfamily.

It localises to the cytoplasm. Functionally, one of the essential components for the initiation of protein synthesis. Protects formylmethionyl-tRNA from spontaneous hydrolysis and promotes its binding to the 30S ribosomal subunits. Also involved in the hydrolysis of GTP during the formation of the 70S ribosomal complex. In Vibrio cholerae serotype O1 (strain ATCC 39541 / Classical Ogawa 395 / O395), this protein is Translation initiation factor IF-2.